A 336-amino-acid chain; its full sequence is Geranylgeranyl pyrophosphate synthase 6, mitochondrial (336 aa).

The N-terminal 22 residues, 1 to 22 (MRPRYSLILSAMRLIRPSNRRL), are a transit peptide targeting the mitochondrion. Residues Lys-80, Arg-83, and His-112 each coordinate isopentenyl diphosphate. Asp-119 and Asp-125 together coordinate Mg(2+). Arg-130 contributes to the dimethylallyl diphosphate binding site. Isopentenyl diphosphate is bound at residue Arg-131. Positions 221, 222, 259, 276, and 286 each coordinate dimethylallyl diphosphate.

The protein belongs to the FPP/GGPP synthase family. As to quaternary structure, monomer. Mg(2+) serves as cofactor.

The protein resides in the mitochondrion. It catalyses the reaction isopentenyl diphosphate + dimethylallyl diphosphate = (2E)-geranyl diphosphate + diphosphate. The catalysed reaction is isopentenyl diphosphate + (2E)-geranyl diphosphate = (2E,6E)-farnesyl diphosphate + diphosphate. It carries out the reaction isopentenyl diphosphate + (2E,6E)-farnesyl diphosphate = (2E,6E,10E)-geranylgeranyl diphosphate + diphosphate. The protein operates within isoprenoid biosynthesis; farnesyl diphosphate biosynthesis; farnesyl diphosphate from geranyl diphosphate and isopentenyl diphosphate: step 1/1. It functions in the pathway isoprenoid biosynthesis; geranyl diphosphate biosynthesis; geranyl diphosphate from dimethylallyl diphosphate and isopentenyl diphosphate: step 1/1. It participates in isoprenoid biosynthesis; geranylgeranyl diphosphate biosynthesis; geranylgeranyl diphosphate from farnesyl diphosphate and isopentenyl diphosphate: step 1/1. Catalyzes the trans-addition of the three molecules of IPP onto DMAPP to form geranylgeranyl pyrophosphate. In Arabidopsis thaliana (Mouse-ear cress), this protein is Geranylgeranyl pyrophosphate synthase 6, mitochondrial.